The chain runs to 418 residues: Putative heat shock protein HSP 90-alpha A4 (418 aa).

The ATP site is built by Asp33, Lys52, Phe78, and Arg204. 2 disordered regions span residues 255 to 289 (EDLE…TSAK) and 383 to 418 (GLGT…RMEK). Over residues 265–274 (EKKKQEEGKQ) the composition is skewed to basic and acidic residues.

This sequence belongs to the heat shock protein 90 family. As to quaternary structure, homodimer.

Its subcellular location is the cytoplasm. Its function is as follows. Putative molecular chaperone that may promote the maturation, structural maintenance and proper regulation of specific target proteins. The sequence is that of Putative heat shock protein HSP 90-alpha A4 (HSP90AA4P) from Homo sapiens (Human).